Consider the following 245-residue polypeptide: Biosynthetic peptidoglycan transglycosylase (245 aa).

Residues 13–35 (VGLARWIVYAGSVFAGAWLATQL) traverse the membrane as a helical segment.

The protein belongs to the glycosyltransferase 51 family.

Its subcellular location is the cell inner membrane. It catalyses the reaction [GlcNAc-(1-&gt;4)-Mur2Ac(oyl-L-Ala-gamma-D-Glu-L-Lys-D-Ala-D-Ala)](n)-di-trans,octa-cis-undecaprenyl diphosphate + beta-D-GlcNAc-(1-&gt;4)-Mur2Ac(oyl-L-Ala-gamma-D-Glu-L-Lys-D-Ala-D-Ala)-di-trans,octa-cis-undecaprenyl diphosphate = [GlcNAc-(1-&gt;4)-Mur2Ac(oyl-L-Ala-gamma-D-Glu-L-Lys-D-Ala-D-Ala)](n+1)-di-trans,octa-cis-undecaprenyl diphosphate + di-trans,octa-cis-undecaprenyl diphosphate + H(+). Its pathway is cell wall biogenesis; peptidoglycan biosynthesis. In terms of biological role, peptidoglycan polymerase that catalyzes glycan chain elongation from lipid-linked precursors. This chain is Biosynthetic peptidoglycan transglycosylase, found in Burkholderia vietnamiensis (strain G4 / LMG 22486) (Burkholderia cepacia (strain R1808)).